The primary structure comprises 374 residues: U-box domain-containing protein 8 (374 aa).

Residues 4–79 enclose the U-box domain; it reads DLPNDFRCPI…LNFAHVSLKE (76 aa). ARM repeat units lie at residues 126-165, 167-206, 208-248, 250-288, and 289-327; these read SSIR…NLSL, DDNK…SLAV, EVNK…ALCS, PDNR…KCRG, and GREE…CLCC.

As to expression, expressed in the whole plant.

It catalyses the reaction S-ubiquitinyl-[E2 ubiquitin-conjugating enzyme]-L-cysteine + [acceptor protein]-L-lysine = [E2 ubiquitin-conjugating enzyme]-L-cysteine + N(6)-ubiquitinyl-[acceptor protein]-L-lysine.. The protein operates within protein modification; protein ubiquitination. Functionally, functions as an E3 ubiquitin ligase. Involved in the age-dependent pseudo-self-compatibility process. In Arabidopsis thaliana (Mouse-ear cress), this protein is U-box domain-containing protein 8 (PUB8).